A 504-amino-acid chain; its full sequence is Protein nucleotidyltransferase YdiU (504 aa).

G99, G101, R102, K122, D134, G135, R185, and R192 together coordinate ATP. The active-site Proton acceptor is the D261. Residues N262 and D271 each contribute to the Mg(2+) site. D271 contributes to the ATP binding site.

Belongs to the SELO family. Mg(2+) serves as cofactor. Requires Mn(2+) as cofactor.

The catalysed reaction is L-seryl-[protein] + ATP = 3-O-(5'-adenylyl)-L-seryl-[protein] + diphosphate. It catalyses the reaction L-threonyl-[protein] + ATP = 3-O-(5'-adenylyl)-L-threonyl-[protein] + diphosphate. The enzyme catalyses L-tyrosyl-[protein] + ATP = O-(5'-adenylyl)-L-tyrosyl-[protein] + diphosphate. It carries out the reaction L-histidyl-[protein] + UTP = N(tele)-(5'-uridylyl)-L-histidyl-[protein] + diphosphate. The catalysed reaction is L-seryl-[protein] + UTP = O-(5'-uridylyl)-L-seryl-[protein] + diphosphate. It catalyses the reaction L-tyrosyl-[protein] + UTP = O-(5'-uridylyl)-L-tyrosyl-[protein] + diphosphate. Nucleotidyltransferase involved in the post-translational modification of proteins. It can catalyze the addition of adenosine monophosphate (AMP) or uridine monophosphate (UMP) to a protein, resulting in modifications known as AMPylation and UMPylation. The protein is Protein nucleotidyltransferase YdiU of Methylococcus capsulatus (strain ATCC 33009 / NCIMB 11132 / Bath).